The following is a 619-amino-acid chain: Putative zinc transporter At3g08650 (619 aa).

15 helical membrane passes run 25-45 (MMHS…VVFI), 102-122 (VALF…PFFF), 129-149 (WAGI…FDLV), 155-175 (HGSG…IWLC), 198-218 (VVLV…GVGV), 230-250 (LLVT…VSMV), 261-281 (AMLW…PAFL), 289-309 (FLPF…IAEV), 354-374 (GFFV…FLVA), 383-403 (HALL…WRPL), 405-425 (LLLS…IGAG), 465-485 (LLAC…LGVA), 528-548 (AAAL…LAGI), 552-572 (GLDH…WQVI), and 585-605 (VGMV…RLVC).

This sequence belongs to the ZIP transporter (TC 2.A.5) family. ZupT subfamily.

It localises to the membrane. May transport zinc. The polypeptide is Putative zinc transporter At3g08650 (Arabidopsis thaliana (Mouse-ear cress)).